Here is a 700-residue protein sequence, read N- to C-terminus: DNA ligase (700 aa).

NAD(+) is bound by residues D61–D65, S110–L111, and E141. K143 functions as the N6-AMP-lysine intermediate in the catalytic mechanism. The NAD(+) site is built by R164, E202, K321, and K345. Residues C439, C442, C457, and C462 each coordinate Zn(2+). The region spanning A619–K700 is the BRCT domain.

This sequence belongs to the NAD-dependent DNA ligase family. LigA subfamily. Mg(2+) serves as cofactor. Requires Mn(2+) as cofactor.

It catalyses the reaction NAD(+) + (deoxyribonucleotide)n-3'-hydroxyl + 5'-phospho-(deoxyribonucleotide)m = (deoxyribonucleotide)n+m + AMP + beta-nicotinamide D-nucleotide.. Functionally, DNA ligase that catalyzes the formation of phosphodiester linkages between 5'-phosphoryl and 3'-hydroxyl groups in double-stranded DNA using NAD as a coenzyme and as the energy source for the reaction. It is essential for DNA replication and repair of damaged DNA. This Hydrogenobaculum sp. (strain Y04AAS1) protein is DNA ligase.